The chain runs to 210 residues: Rho-related GTP-binding protein RhoD (210 aa).

A GTP-binding site is contributed by 24 to 31 (GDGGCGKT). An Effector region motif is present at residues 46-54 (YSPTVFERY). Residues 71 to 75 (DTAGQ) and 129 to 132 (CKID) each bind GTP. Residue Cys207 is modified to Cysteine methyl ester. Cys207 is lipidated: S-geranylgeranyl cysteine. The propeptide at 208–210 (LAT) is removed in mature form.

The protein belongs to the small GTPase superfamily. Rho family. Interacts with PAK5. Interacts (in GTP-bound form) with DAPK3, FILIP1 and WHAMM. Interacts (independent of GTP-loaded status) with ANKFY1. In terms of tissue distribution, widely expressed.

It is found in the cell membrane. The protein localises to the early endosome. Involved in endosome dynamics. May coordinate membrane transport with the function of the cytoskeleton. Involved in the internalization and trafficking of activated tyrosine kinase receptors such as PDGFRB. Participates in the reorganization of actin cytoskeleton; the function seems to involve WHAMM and includes regulation of filopodia formation and actin filament bundling. Can modulate the effect of DAPK3 in reorganization of actin cytoskeleton and focal adhesion dissolution. The polypeptide is Rho-related GTP-binding protein RhoD (Rhod) (Mus musculus (Mouse)).